The primary structure comprises 409 residues: Immunity-related GTPase family M protein 1 (409 aa).

The IRG-type G domain occupies 75–251; it reads IPVSIFVTGD…PKLRDTLHKD (177 aa). GTP is bound by residues 84-91, 109-113, and 191-193; these read DSGNGMSS, TGVVR, and KLD. S202 carries the post-translational modification Phosphoserine. 232–234 serves as a coordination point for GTP; the sequence is SSL. K270 is covalently cross-linked (Glycyl lysine isopeptide (Lys-Gly) (interchain with G-Cter in ubiquitin)). An alpha-K amphipathic helix region spans residues 350–374; it reads KLRLMTCAIVNAFFRLLRFLPCVCC.

Belongs to the TRAFAC class dynamin-like GTPase superfamily. IRG family. In terms of assembly, interacts with ULK1; promoting the coassembly of ULK1 and BECN1. Interacts with BECN1; enhancing BECN1-interacting partners and influencing the composition of the BECN1 complex. Interacts with ATG16L1. Interacts with NOD2; promoting Irgm1 'Lys-63'-linked polyubiquitination, which is required for interactions with the core autophagy factors. Interacts with STX17; promoting STX17 recruitment to autophagosomes. Interacts with ATG8 proteins (GABARAP, GABARAPL1, GABARAPL2, MAP1LC3A, MAP1LC3B and MAP1LC3C); promoting STX17 recruitment to autophagosomes. Interacts with TFEB; promoting association between TFEB and PPP3CB and TFEB dephosphorylation. Interacts with PPP3CB; promoting association between TFEB and PPP3CB and TFEB dephosphorylation. Interacts with NLRP3; preventing NLRP3 inflammasome assembly and promoting SQSTM1/p62-dependent autophagic degradation of NLRP3. Interacts with CGAS; promoting SQSTM1/p62-dependent autophagic degradation of CGAS. Interacts with RIGI/RIG-I; promoting SQSTM1/p62-dependent autophagic degradation of RIGI/RIG-I. Interacts with NOD1; promoting SQSTM1/p62-dependent autophagic degradation of RIGI/RIG-I. Interacts with NOD2; promoting SQSTM1/p62-dependent autophagic degradation of RIGI/RIG-I. Interacts with RIPK2; promoting SQSTM1/p62-dependent autophagic degradation of RIGI/RIG-I. Interacts with PIK3CA. Palmitoylated on C-terminal Cys residues. Palmitoylation, together with the alpha-K amphipathic helix, which binds phosphatidylinositol, mediate binding to membranes. In terms of processing, ubiquitinated via 'Lys-63'-linked polyubiquitination in a NOD2-dependent process. 'Lys-63'-linked polyubiquitination is required for interactions with the core autophagy factors. Ubiquitination at Lys-270 by the DCX(WDR77) complex, also named CLR4(WDR77) complex, in intestinal cells, leading to its degradation by the proteasome. Expressed in lung and primary macrophages.

It is found in the golgi apparatus membrane. The protein resides in the cell membrane. Its subcellular location is the cytoplasmic vesicle. The protein localises to the phagosome membrane. It localises to the autophagosome membrane. It is found in the lysosome membrane. The protein resides in the late endosome membrane. Its subcellular location is the mitochondrion membrane. The protein localises to the lipid droplet. It localises to the cell projection. It is found in the phagocytic cup. The enzyme catalyses GTP + H2O = GDP + phosphate + H(+). In terms of biological role, immunity-related GTPase that plays important roles in innate immunity and inflammatory response. Acts as a dynamin-like protein that binds to intracellular membranes and promotes remodeling and trafficking of those membranes. Required for clearance of acute protozoan and bacterial infections by interacting with autophagy and lysosome regulatory proteins, thereby promoting the fusion of phagosomes with lysosomes for efficient degradation of cargo including microbes. Regulates selective autophagy, including xenophagy and mitophagy, both directly and indirectly. Directly regulates autophagy by acting as a molecular adapter that promotes the coassembly of the core autophagy machinery to mediate antimicrobial defense: Irgm1 (1) activates AMPK, which in turn phosphorylates ULK1 and BECN1 to induce autophagy, (2) promotes the coassembly of ULK1 and BECN1, enhancing BECN1-interacting partners and (3) influences the composition of the BECN1 complex, by competing with the negative regulators BCL2 and RUBCN, to trigger autophagy. Also activates autophagy by promoting recruitment of STX17 to autophagosomes. In collaboration with ATG8 proteins, regulate lysosomal biogenesis, a fundamental process for any autophagic pathway, by promoting TFEB dephosphorylation. Also modulates autophagy by assisting with autophagosome formation and preventing lysosomal deacidification. Regulates autophagy by affecting mitochondrial fusion and fission. Also involved in M1 macrophage activation for the production of proinflammatory cytokines. While activating autophagy, acts as a key negative regulator of the inflammatory and interferon responses both by (1) promoting mitophagy and (2) mediating autophagy-dependent degradation of effectors of the inflammatory response. Promotes degradation of damaged and IFNG/IFN-gamma-stressed mitochondria via mitophagy, preventing cytosolic release of ligands that activate inflammation. Negatively regulates interferon-signaling in hematopoietic stem cells, preserving hematopoietic stem cell number and function. Promotes expansion of activated CD4(+) T-cells by inhibiting IFNG/IFN-gamma signaling, thereby preventing Ifng-mediated cell death of CD4(+) T-cells. Acts as a suppressor of inflammation by promoting recruitment of inflammation effectors, such as CGAS, RIGI/RIG-I and NLRP3, to autophagosome membranes, leading to their SQSTM1/p62-dependent autophagic degradation. Also directly inhibits assembly of the NLRP3 inflammasome by preventing the association between NLRP3 and PYCARD. Acts as a negative regulator of antiviral innate immune response by suppressing the RIPK2-dependent pro-inflammatory response: mediates recruitment of RIPosomes, composed of RIPK2 and NOD1 or NOD2, to autophagosome membranes, promoting their SQSTM1/p62-dependent autophagic degradation. This chain is Immunity-related GTPase family M protein 1, found in Mus musculus (Mouse).